The sequence spans 293 residues: 4-hydroxy-tetrahydrodipicolinate synthase (293 aa).

Position 47 (T47) interacts with pyruvate. Catalysis depends on Y135, which acts as the Proton donor/acceptor. Residue K163 is the Schiff-base intermediate with substrate of the active site. V205 contacts pyruvate.

The protein belongs to the DapA family. Homotetramer; dimer of dimers.

The protein resides in the cytoplasm. The enzyme catalyses L-aspartate 4-semialdehyde + pyruvate = (2S,4S)-4-hydroxy-2,3,4,5-tetrahydrodipicolinate + H2O + H(+). Its pathway is amino-acid biosynthesis; L-lysine biosynthesis via DAP pathway; (S)-tetrahydrodipicolinate from L-aspartate: step 3/4. In terms of biological role, catalyzes the condensation of (S)-aspartate-beta-semialdehyde [(S)-ASA] and pyruvate to 4-hydroxy-tetrahydrodipicolinate (HTPA). This is 4-hydroxy-tetrahydrodipicolinate synthase from Methylibium petroleiphilum (strain ATCC BAA-1232 / LMG 22953 / PM1).